Consider the following 403-residue polypeptide: Decapping and exoribonuclease protein 1 (403 aa).

Residue E223 participates in a divalent metal cation binding. E260 contributes to the substrate binding site. Residues D262, E273, and I274 each coordinate a divalent metal cation. Substrate is bound by residues K275 and Q297.

The protein belongs to the DXO/Dom3Z family. A divalent metal cation serves as cofactor.

The protein resides in the cytoplasm. It catalyses the reaction a 5'-end NAD(+)-phospho-ribonucleoside in mRNA + H2O = a 5'-end phospho-ribonucleoside in mRNA + NAD(+) + H(+). The catalysed reaction is a 5'-end (N(7)-methyl 5'-triphosphoguanosine)-ribonucleoside-ribonucleotide in mRNA + H2O = a (N(7)-methyl 5'-triphosphoguanosine)-nucleoside + a 5'-end phospho-ribonucleoside in mRNA + H(+). In terms of biological role, decapping enzyme for NAD-capped RNAs: specifically hydrolyzes the nicotinamide adenine dinucleotide (NAD) cap from a subset of RNAs by removing the entire NAD moiety from the 5'-end of an NAD-capped RNA. The NAD-cap is present at the 5'-end of some RNAs and snoRNAs. In contrast to the canonical 5'-end N7 methylguanosine (m7G) cap, the NAD cap promotes mRNA decay. Also acts as a non-canonical decapping enzyme that removes the entire cap structure of m7G capped or incompletely capped RNAs and mediates their subsequent degradation. Has decapping and 5'-3' exonuclease activities. Has decapping activity toward incomplete 5'-end cap mRNAs such as unmethylated 5'-end-capped RNA to release GpppN and 5'-end monophosphate RNA. The 5'-end monophosphate RNA is then degraded by the 5'-3' exoribonuclease activity, enabling this enzyme to decap and degrade incompletely capped mRNAs. This is Decapping and exoribonuclease protein 1 from Kluyveromyces lactis (strain ATCC 8585 / CBS 2359 / DSM 70799 / NBRC 1267 / NRRL Y-1140 / WM37) (Yeast).